The chain runs to 424 residues: Zygote arrest protein 1 (424 aa).

2 disordered regions span residues 125–175 (RTLQ…PMRF) and 196–313 (GPGP…SPEL). Residues 141 to 150 (GAEGTTGGGS) are compositionally biased toward gly residues. Residues 289–298 (RARDGGDGRE) are compositionally biased toward basic and acidic residues. A 3CxxC-type zinc finger spans residues 326 to 409 (KYGYYHCKDC…RQDLCGRCKG (84 aa)).

Belongs to the ZAR1 family. In terms of assembly, interacts with YBX2. Post-translationally, ubiquitinated and degradaded by the proteasome during oocyte meiotic maturation, leading to MARDO (mitochondria-associated ribonucleoprotein domain) membraneless compartment dissolution. As to expression, ovary and testis.

It localises to the cytoplasm. The protein localises to the cytoplasmic ribonucleoprotein granule. In terms of biological role, mRNA-binding protein that mediates formation of MARDO (mitochondria-associated ribonucleoprotein domain), a membraneless compartment that stores maternal mRNAs in oocytes. MARDO assembly around mitochondria is directed by an increase in mitochondrial membrane potential during oocyte growth. Promotes formation of MARDO phase-separated membraneless compartment by undergoing liquid-liquid phase separation upon binding to maternal mRNAs. Binds to the 3'-UTR of maternal mRNAs. Maternal mRNAs stored in the MARDO are translationally repressed. Essential for female fertility and oocyte-to-embryo transition by coordinating maternal mRNA storage, translation and degradation. The polypeptide is Zygote arrest protein 1 (Homo sapiens (Human)).